The primary structure comprises 183 residues: ATP-dependent protease subunit HslV (183 aa).

Thr-12 is a catalytic residue. Positions 166, 169, and 172 each coordinate Na(+).

This sequence belongs to the peptidase T1B family. HslV subfamily. A double ring-shaped homohexamer of HslV is capped on each side by a ring-shaped HslU homohexamer. The assembly of the HslU/HslV complex is dependent on binding of ATP.

The protein localises to the cytoplasm. It carries out the reaction ATP-dependent cleavage of peptide bonds with broad specificity.. Allosterically activated by HslU binding. In terms of biological role, protease subunit of a proteasome-like degradation complex believed to be a general protein degrading machinery. This is ATP-dependent protease subunit HslV from Afipia carboxidovorans (strain ATCC 49405 / DSM 1227 / KCTC 32145 / OM5) (Oligotropha carboxidovorans).